We begin with the raw amino-acid sequence, 474 residues long: Phenolic acid decarboxylase (474 aa).

The Mn(2+) site is built by Asn-161, His-182, and Glu-224. Prenylated FMN-binding positions include 161-166 (NVGTYR) and 181-182 (MH). Glu-273 (proton donor) is an active-site residue.

This sequence belongs to the UbiD family. YclC subfamily. Requires prenylated FMN as cofactor. The cofactor is Mn(2+).

The catalysed reaction is vanillate + H(+) = guaiacol + CO2. Its function is as follows. Involved in the non-oxidative decarboxylation and detoxification of phenolic derivatives under both aerobic and anaerobic conditions. Phenolic acid decarboxylase that catalyzes the reversible decarboxylation of vanillate. In Streptomyces sp. (strain D7), this protein is Phenolic acid decarboxylase.